Reading from the N-terminus, the 315-residue chain is MSSEVETSEGVDESENNSTAPEKENHTKMADLSELLKEGTKEAHDRAENTQFVKDFLKGNIKKELFKLATTALYFTYSALEEEMDRNKDHPAFAPLYFPTELHRKEALIKDMEYFFGENWEEQVKCSEAAQKYVDRIHYVGQNEPELLVAHAYTRYMGDLSGGQVLKKVAQRALKLPSTGEGTQFYLFEHVDNAQQFKQFYRARMNALDLSMKTKERIVEEANKAFEYNMQIFSELDQAGSMLTKETLEDGLPVHDGKGDVRKCPFYAAQPDKGTLGGSNCPFRTAMAVLRKPSLQLILAASVALVAGLLAWYYM.

Residues 1–15 (MSSEVETSEGVDESE) are compositionally biased toward polar residues. The tract at residues 1–29 (MSSEVETSEGVDESENNSTAPEKENHTKM) is disordered. S2 is subject to N-acetylserine. S2 carries the phosphoserine modification. The Cytoplasmic segment spans residues 2 to 294 (SSEVETSEGV…TAMAVLRKPS (293 aa)). Heme b contacts are provided by H44, Y153, K198, and R202. HRM repeat units follow at residues 263–268 (KCPFYA) and 280–285 (NCPFRT). Residues C264 and C281 each carry the S-nitrosocysteine modification. Residues 295-315 (LQLILAASVALVAGLLAWYYM) form a helical; Anchor for type IV membrane protein membrane-spanning segment.

The protein belongs to the heme oxygenase family. In terms of processing, a soluble form arises by proteolytic removal of the membrane anchor. S-nitrosylated by BLVRB. In terms of tissue distribution, widely distributed in body with a high concentration in the brain.

The protein resides in the microsome membrane. It is found in the endoplasmic reticulum membrane. The catalysed reaction is heme b + 3 reduced [NADPH--hemoprotein reductase] + 3 O2 = biliverdin IXalpha + CO + Fe(2+) + 3 oxidized [NADPH--hemoprotein reductase] + 3 H2O + H(+). With respect to regulation, inhibited by metalloporphyrins such as Sn- and Zn-protoporphyrins. Catalyzes the oxidative cleavage of heme at the alpha-methene bridge carbon, released as carbon monoxide (CO), to generate biliverdin IXalpha, while releasing the central heme iron chelate as ferrous iron. This Rattus norvegicus (Rat) protein is Heme oxygenase 2 (Hmox2).